The following is a 362-amino-acid chain: S-adenosylmethionine:tRNA ribosyltransferase-isomerase (362 aa).

This sequence belongs to the QueA family. In terms of assembly, monomer.

It localises to the cytoplasm. It carries out the reaction 7-aminomethyl-7-carbaguanosine(34) in tRNA + S-adenosyl-L-methionine = epoxyqueuosine(34) in tRNA + adenine + L-methionine + 2 H(+). It functions in the pathway tRNA modification; tRNA-queuosine biosynthesis. Its function is as follows. Transfers and isomerizes the ribose moiety from AdoMet to the 7-aminomethyl group of 7-deazaguanine (preQ1-tRNA) to give epoxyqueuosine (oQ-tRNA). The sequence is that of S-adenosylmethionine:tRNA ribosyltransferase-isomerase from Methylobacterium sp. (strain 4-46).